Here is a 239-residue protein sequence, read N- to C-terminus: tRNA1(Val) (adenine(37)-N6)-methyltransferase (239 aa).

The protein belongs to the methyltransferase superfamily. tRNA (adenine-N(6)-)-methyltransferase family.

The protein localises to the cytoplasm. The catalysed reaction is adenosine(37) in tRNA1(Val) + S-adenosyl-L-methionine = N(6)-methyladenosine(37) in tRNA1(Val) + S-adenosyl-L-homocysteine + H(+). Functionally, specifically methylates the adenine in position 37 of tRNA(1)(Val) (anticodon cmo5UAC). This is tRNA1(Val) (adenine(37)-N6)-methyltransferase from Trichodesmium erythraeum (strain IMS101).